The following is a 344-amino-acid chain: Methionine import ATP-binding protein MetN (344 aa).

Residues 2-241 form the ABC transporter domain; it reads IEINQVNKVF…PKTELAHDFI (240 aa). 38 to 45 serves as a coordination point for ATP; sequence GSSGAGKS.

Belongs to the ABC transporter superfamily. Methionine importer (TC 3.A.1.24) family. The complex is composed of two ATP-binding proteins (MetN), two transmembrane proteins (MetI) and a solute-binding protein (MetQ).

Its subcellular location is the cell inner membrane. It carries out the reaction L-methionine(out) + ATP + H2O = L-methionine(in) + ADP + phosphate + H(+). It catalyses the reaction D-methionine(out) + ATP + H2O = D-methionine(in) + ADP + phosphate + H(+). In terms of biological role, part of the ABC transporter complex MetNIQ involved in methionine import. Responsible for energy coupling to the transport system. In Vibrio vulnificus (strain YJ016), this protein is Methionine import ATP-binding protein MetN.